A 233-amino-acid chain; its full sequence is Octanoyltransferase (233 aa).

The 181-residue stretch at 34–214 (GQAPSTVLLL…EFSAREATLI (181 aa)) folds into the BPL/LPL catalytic domain. Residues 72–79 (RGGKLTWH), 144–146 (AIG), and 157–159 (GFS) each bind substrate. Cys-175 functions as the Acyl-thioester intermediate in the catalytic mechanism.

The protein belongs to the LipB family.

The protein localises to the cytoplasm. It catalyses the reaction octanoyl-[ACP] + L-lysyl-[protein] = N(6)-octanoyl-L-lysyl-[protein] + holo-[ACP] + H(+). The protein operates within protein modification; protein lipoylation via endogenous pathway; protein N(6)-(lipoyl)lysine from octanoyl-[acyl-carrier-protein]: step 1/2. In terms of biological role, catalyzes the transfer of endogenously produced octanoic acid from octanoyl-acyl-carrier-protein onto the lipoyl domains of lipoate-dependent enzymes. Lipoyl-ACP can also act as a substrate although octanoyl-ACP is likely to be the physiological substrate. The chain is Octanoyltransferase from Renibacterium salmoninarum (strain ATCC 33209 / DSM 20767 / JCM 11484 / NBRC 15589 / NCIMB 2235).